Consider the following 190-residue polypeptide: Adenylate kinase (190 aa).

Residue 10–15 participates in ATP binding; it reads AAGKGT. The tract at residues 30 to 59 is NMP; that stretch reads STGDMLRAAIASGSELGQRVSGIMERGELV. Residues Thr31, Arg36, 57–59, 85–88, and Gln92 each bind AMP; these read ELV and GFPR. The LID stretch occupies residues 126–136; that stretch reads GRFAESGRADD. ATP is bound at residue Arg127. Residues Arg133 and Arg144 each coordinate AMP. Gly172 is an ATP binding site.

This sequence belongs to the adenylate kinase family. Monomer.

It localises to the cytoplasm. It catalyses the reaction AMP + ATP = 2 ADP. It participates in purine metabolism; AMP biosynthesis via salvage pathway; AMP from ADP: step 1/1. Its function is as follows. Catalyzes the reversible transfer of the terminal phosphate group between ATP and AMP. Plays an important role in cellular energy homeostasis and in adenine nucleotide metabolism. The protein is Adenylate kinase of Phenylobacterium zucineum (strain HLK1).